Consider the following 86-residue polypeptide: Small ribosomal subunit protein bS20 (86 aa).

Belongs to the bacterial ribosomal protein bS20 family.

In terms of biological role, binds directly to 16S ribosomal RNA. This is Small ribosomal subunit protein bS20 from Kocuria rhizophila (strain ATCC 9341 / DSM 348 / NBRC 103217 / DC2201).